The following is a 298-amino-acid chain: Short-chain dehydrogenase reductase 4 (298 aa).

50–74 (IITGGASGIGAEAVRLFTDHGAKVV) is an NAD(+) binding site. Residue Ser-182 participates in substrate binding. Catalysis depends on Tyr-195, which acts as the Proton acceptor.

The protein belongs to the short-chain dehydrogenases/reductases (SDR) family.

The polypeptide is Short-chain dehydrogenase reductase 4 (SDR4) (Arabidopsis thaliana (Mouse-ear cress)).